The primary structure comprises 193 residues: Phosphatidylglycerophosphatase and protein-tyrosine phosphatase 1 (193 aa).

Residues 1 to 31 (MAASAWLEAGLARVLFYPTLLYTVFRGRVRG) constitute a mitochondrion transit peptide. A Tyrosine-protein phosphatase domain is found at 37–188 (WYHRIDHTVL…LKEFHKEITA (152 aa)). N6-succinyllysine is present on Lys85. Catalysis depends on Cys132, which acts as the Phosphocysteine intermediate.

The protein belongs to the protein-tyrosine phosphatase family. Non-receptor class dual specificity subfamily. As to quaternary structure, interacts with STYXL1; the interaction inhibits PTPMT1 catalytic activity. Predominantly expressed in testis. Expressed at lower level in heart, brain, spleen, lung, liver, skeletal muscle, kidney, bone marrow, eye, lymph node, smooth muscle, prostate, thymus, stomach and uterus.

Its subcellular location is the mitochondrion inner membrane. It carries out the reaction a 1,2-diacyl-sn-glycero-3-phospho-(1'-sn-glycero-3'-phosphate) + H2O = a 1,2-diacyl-sn-glycero-3-phospho-(1'-sn-glycerol) + phosphate. The catalysed reaction is O-phospho-L-tyrosyl-[protein] + H2O = L-tyrosyl-[protein] + phosphate. The enzyme catalyses O-phospho-L-seryl-[protein] + H2O = L-seryl-[protein] + phosphate. It catalyses the reaction O-phospho-L-threonyl-[protein] + H2O = L-threonyl-[protein] + phosphate. It carries out the reaction 1,2-di-(9Z-octadecenoyl)-sn-glycero-3-phospho-(1'-sn-glycerol-3'-phosphate) + H2O = 1,2-di-(9Z-octadecenoyl)-sn-glycero-3-phospho-(1'-sn-glycerol) + phosphate. The catalysed reaction is 1,2-dioctanoyl-sn-glycero-3-phospho-(1D-myo-inositol-5-phosphate) + H2O = 1,2-dioctanoyl-sn-glycero-3-phospho-(1D-myo-inositol) + phosphate. The enzyme catalyses a 1-acyl-2-hexanoyl-sn-glycero-3-phospho-(1D-myo-inositol-5-phosphate) + H2O = a 1-acyl-2-hexanoyl-sn-glycero-3-phospho-(1D-myo-inositol) + phosphate. It catalyses the reaction 1,2-dibutyryl-sn-glycero-3-phospho-(1D-myo-inositol-5-phosphate) + H2O = 1,2-dibutyryl-sn-glycero-3-phospho-(1D-myo-inositol) + phosphate. The protein operates within phospholipid metabolism; phosphatidylglycerol biosynthesis; phosphatidylglycerol from CDP-diacylglycerol: step 2/2. Its function is as follows. Lipid phosphatase which dephosphorylates phosphatidylglycerophosphate (PGP) to phosphatidylglycerol (PG). PGP is an essential intermediate in the biosynthetic pathway of cardiolipin, a mitochondrial-specific phospholipid regulating the membrane integrity and activities of the organelle. Has also been shown to display phosphatase activity toward phosphoprotein substrates, specifically mediates dephosphorylation of mitochondrial proteins, thereby playing an essential role in ATP production. Has probably a preference for proteins phosphorylated on Ser and/or Thr residues compared to proteins phosphorylated on Tyr residues. Probably involved in regulation of insulin secretion in pancreatic beta cells. May prevent intrinsic apoptosis, probably by regulating mitochondrial membrane integrity. The polypeptide is Phosphatidylglycerophosphatase and protein-tyrosine phosphatase 1 (Mus musculus (Mouse)).